The sequence spans 213 residues: NADH-quinone oxidoreductase subunit C (213 aa).

Belongs to the complex I 30 kDa subunit family. NDH-1 is composed of 14 different subunits. Subunits NuoB, C, D, E, F, and G constitute the peripheral sector of the complex.

It is found in the cell inner membrane. It catalyses the reaction a quinone + NADH + 5 H(+)(in) = a quinol + NAD(+) + 4 H(+)(out). NDH-1 shuttles electrons from NADH, via FMN and iron-sulfur (Fe-S) centers, to quinones in the respiratory chain. The immediate electron acceptor for the enzyme in this species is believed to be ubiquinone. Couples the redox reaction to proton translocation (for every two electrons transferred, four hydrogen ions are translocated across the cytoplasmic membrane), and thus conserves the redox energy in a proton gradient. In Rhodospirillum rubrum (strain ATCC 11170 / ATH 1.1.1 / DSM 467 / LMG 4362 / NCIMB 8255 / S1), this protein is NADH-quinone oxidoreductase subunit C.